Reading from the N-terminus, the 360-residue chain is Dynein intermediate light chain dil1 (360 aa).

It belongs to the dynein light intermediate chain DYN3 family. As to quaternary structure, the dynein complex consists of at least two heavy chains and a number of intermediate and light chains. Interacts with rga3, sec10, sec16, syp1, rvb2, spbc19c7.04c, spbc2f12.05 and spac3a11.10c. In terms of processing, the N-terminal part is acetylated.

Its subcellular location is the cytoplasm. It localises to the cytoskeleton. Its function is as follows. Component of the cytoplasmic dynein which acts as a motor for the intracellular retrograde motility of vesicles and organelles along microtubules. Promotes oscillatory nuclear movement and efficient pairing of homologous centromeres during meiotic prophase. This is Dynein intermediate light chain dil1 (dil1) from Schizosaccharomyces pombe (strain 972 / ATCC 24843) (Fission yeast).